A 72-amino-acid polypeptide reads, in one-letter code: Translation initiation factor IF-1 (72 aa).

The 72-residue stretch at 1–72 (MAKEDNIEMQ…SKGRIVFRSR (72 aa)) folds into the S1-like domain.

This sequence belongs to the IF-1 family. In terms of assembly, component of the 30S ribosomal translation pre-initiation complex which assembles on the 30S ribosome in the order IF-2 and IF-3, IF-1 and N-formylmethionyl-tRNA(fMet); mRNA recruitment can occur at any time during PIC assembly.

It localises to the cytoplasm. Functionally, one of the essential components for the initiation of protein synthesis. Stabilizes the binding of IF-2 and IF-3 on the 30S subunit to which N-formylmethionyl-tRNA(fMet) subsequently binds. Helps modulate mRNA selection, yielding the 30S pre-initiation complex (PIC). Upon addition of the 50S ribosomal subunit IF-1, IF-2 and IF-3 are released leaving the mature 70S translation initiation complex. The polypeptide is Translation initiation factor IF-1 (Sodalis glossinidius (strain morsitans)).